Consider the following 116-residue polypeptide: Iron-sulfur cluster insertion protein ErpA (116 aa).

The iron-sulfur cluster site is built by C44, C108, and C110.

The protein belongs to the HesB/IscA family. As to quaternary structure, homodimer. Iron-sulfur cluster serves as cofactor.

Its function is as follows. Required for insertion of 4Fe-4S clusters for at least IspG. The chain is Iron-sulfur cluster insertion protein ErpA from Shewanella pealeana (strain ATCC 700345 / ANG-SQ1).